The sequence spans 602 residues: MCGIIGYIGDRKACEVIVKGLKRLEYRGYDSAGVVTGNGETLDVRKGAGRIDKLTEKLGFLEMEGNRGIGHTRWATHGVPNDINAHPQKDCTGKIVLVHNGIIENFAELKEELLKKGHVFRSDTDTEVIAHLIEEELKGSENFEEALRKALNKLRGSFALAIVYADEPDKLYVVRNESPLVLGIGEGEMFAASDVPAFLEYTNKVIFLDDGEYAILTKDSYVVKRIDTGEVVEKPVHEISWTLEMAEKAGYPHFMLKEIYEQPRAIKDAIHGNREIIRSVAEEIANYDKIIFVAMGTSYHAALVGKSLFQRLAKKVPIVEEASEFRYEFEDLIDDKTLVIAITQSGETADTLAAMKLAKKNGAKVLAVVNVVGSMATRIADLTLYTHAGPEIGVAATKTYTTQLTVLTMLAIELAKVLGTASEDYLEKLEDELMKVPELVELALKHDEALRELAETLKDKRDFFYIGRGISVPTALEGALKLKEISYIHAEGLSAGELKHGPLALLEDGVPVVAINPSGKVFDKMVSNIEEAKARGAMIISLSDREELSRVSDVLVKMPEVDELLSPIVYVVPLQLLAYHLAVLRGNDPDKPRNLAKSVTVE.

The Nucleophile; for GATase activity role is filled by Cys-2. A Glutamine amidotransferase type-2 domain is found at 2–219 (CGIIGYIGDR…DGEYAILTKD (218 aa)). 2 SIS domains span residues 280-420 (VAEE…VLGT) and 453-592 (LAET…PDKP). Lys-597 serves as the catalytic For Fru-6P isomerization activity.

As to quaternary structure, homodimer.

Its subcellular location is the cytoplasm. The enzyme catalyses D-fructose 6-phosphate + L-glutamine = D-glucosamine 6-phosphate + L-glutamate. Its function is as follows. Catalyzes the first step in hexosamine metabolism, converting fructose-6P into glucosamine-6P using glutamine as a nitrogen source. The chain is Glutamine--fructose-6-phosphate aminotransferase [isomerizing] from Thermococcus kodakarensis (strain ATCC BAA-918 / JCM 12380 / KOD1) (Pyrococcus kodakaraensis (strain KOD1)).